Consider the following 386-residue polypeptide: Galactokinase (386 aa).

Position 35–38 (35–38 (EHTD)) interacts with substrate. Residues serine 69 and 125–131 (GAGLSSS) each bind ATP. Mg(2+)-binding residues include serine 131 and glutamate 163. Aspartate 175 functions as the Proton acceptor in the catalytic mechanism. Tyrosine 224 contributes to the substrate binding site.

Belongs to the GHMP kinase family. GalK subfamily.

It localises to the cytoplasm. The catalysed reaction is alpha-D-galactose + ATP = alpha-D-galactose 1-phosphate + ADP + H(+). Its pathway is carbohydrate metabolism; galactose metabolism. Catalyzes the transfer of the gamma-phosphate of ATP to D-galactose to form alpha-D-galactose-1-phosphate (Gal-1-P). In Vibrio parahaemolyticus serotype O3:K6 (strain RIMD 2210633), this protein is Galactokinase.